The sequence spans 237 residues: Ribosomal RNA small subunit methyltransferase G (237 aa).

Residues G78, F83, 129 to 130 (AE), and R148 contribute to the S-adenosyl-L-methionine site. The segment at 218–237 (KKETPNKYPRKAGMPNKRPL) is disordered.

The protein belongs to the methyltransferase superfamily. RNA methyltransferase RsmG family.

It is found in the cytoplasm. Its function is as follows. Specifically methylates the N7 position of a guanine in 16S rRNA. This chain is Ribosomal RNA small subunit methyltransferase G, found in Streptococcus pneumoniae (strain ATCC BAA-255 / R6).